We begin with the raw amino-acid sequence, 216 residues long: Thiamine-phosphate synthase (216 aa).

4-amino-2-methyl-5-(diphosphooxymethyl)pyrimidine is bound by residues 37–41 and Asp68; that span reads QVRSK. Positions 69 and 93 each coordinate Mg(2+). A 4-amino-2-methyl-5-(diphosphooxymethyl)pyrimidine-binding site is contributed by Thr112. 2-[(2R,5Z)-2-carboxy-4-methylthiazol-5(2H)-ylidene]ethyl phosphate is bound at residue 140–142; it reads TPT. Residue Lys143 participates in 4-amino-2-methyl-5-(diphosphooxymethyl)pyrimidine binding.

This sequence belongs to the thiamine-phosphate synthase family. It depends on Mg(2+) as a cofactor.

It carries out the reaction 2-[(2R,5Z)-2-carboxy-4-methylthiazol-5(2H)-ylidene]ethyl phosphate + 4-amino-2-methyl-5-(diphosphooxymethyl)pyrimidine + 2 H(+) = thiamine phosphate + CO2 + diphosphate. The catalysed reaction is 2-(2-carboxy-4-methylthiazol-5-yl)ethyl phosphate + 4-amino-2-methyl-5-(diphosphooxymethyl)pyrimidine + 2 H(+) = thiamine phosphate + CO2 + diphosphate. It catalyses the reaction 4-methyl-5-(2-phosphooxyethyl)-thiazole + 4-amino-2-methyl-5-(diphosphooxymethyl)pyrimidine + H(+) = thiamine phosphate + diphosphate. It functions in the pathway cofactor biosynthesis; thiamine diphosphate biosynthesis; thiamine phosphate from 4-amino-2-methyl-5-diphosphomethylpyrimidine and 4-methyl-5-(2-phosphoethyl)-thiazole: step 1/1. Condenses 4-methyl-5-(beta-hydroxyethyl)thiazole monophosphate (THZ-P) and 2-methyl-4-amino-5-hydroxymethyl pyrimidine pyrophosphate (HMP-PP) to form thiamine monophosphate (TMP). This chain is Thiamine-phosphate synthase, found in Corynebacterium efficiens (strain DSM 44549 / YS-314 / AJ 12310 / JCM 11189 / NBRC 100395).